We begin with the raw amino-acid sequence, 699 residues long: MPKSVKPISESDKLSDHLRDSSLTSEINKPDFRELDLGSPVSPLRSQPRGLTTTTTTTTTSSSSSSSSGSVTGRIKHAPVIGRSNSVRSQSNSSSGNNNLRPRSDSATTSSSSHSQPLLSSSSSSATSPAPTSPANVLPTGNICPSGKIQITGMTQSRSRSDVLGSGTGTYGHGSIMRGGGISPAKPTNTGGGSNSPVNVGSSSRSSSTVATGETPIWKKAILGSDSEEVKRVGNEMYRKGLFNEALKLYDRAIALSPTNAAYRSNRAAALIGLSRIGEAVKECEDAVRSDPNYGRAHHRLALLLIRLGQVNSARKHLCFLGRPSDPMELQKLEAVEKHLIKCVDARRVTDWKTVLIEADAAIVSGADFSPQLFMCKVEAFLKLHRLDDAQSKLLEVPKVEPFPVSCSQTRFSGMACEAYIYFVKAQIEMALGRFENAVMAAEKASQIDPRCNEVAMLHNTVTLVARARARGNDLYKSERYTEASSAYAEGLRLDPCNAILYCNRAACWFKLGMWERSIEDCNQALRYQPSYTKPLLRRAASNSKMERWGAAVSDYEALIRELPHDKEVAESLFHAQVALKKSRGEEVLNMEFGGEVEEIYSLEQFKSAMNLPGVSVIHFSTASDHQCKQISPFVDSLCTRYPSIHFLKVDIDKCPSIGNAENVRVVPTVKIYKNGSRVKEIVCPSKEVLEYSVRHYSG.

The interval 1–211 (MPKSVKPISE…SSSRSSSTVA (211 aa)) is disordered. The segment covering 9–20 (SESDKLSDHLRD) has biased composition (basic and acidic residues). 2 positions are modified to phosphoserine: Ser39 and Ser42. Low complexity-rich tracts occupy residues 52–70 (TTTT…SSGS) and 83–135 (RSNS…TSPA). A compositionally biased stretch (gly residues) spans 166-182 (SGTGTYGHGSIMRGGGI). Residues 195 to 210 (NSPVNVGSSSRSSSTV) show a composition bias toward low complexity. TPR repeat units follow at residues 227-260 (SEEV…SPTN), 262-294 (AYRS…DPNY), 296-328 (RAHH…SDPM), 419-452 (AYIY…DPRC), 465-498 (VARA…DPCN), 499-532 (AILY…QPSY), and 534-566 (KPLL…LPHD). In terms of domain architecture, Thioredoxin spans 605 to 691 (QFKSAMNLPG…IVCPSKEVLE (87 aa)).

As to expression, expressed in the root elongation zone, stele, root cap, embryo vascular system, leaf axilar buds, silique abscission zone and guard cells.

Functionally, involved in responses to osmotic stress and abscisic acid (ABA). May act as a positive regulator of ABA signaling during germination and seedling development under stress. The protein is TPR repeat-containing thioredoxin TTL1 (TTL1) of Arabidopsis thaliana (Mouse-ear cress).